We begin with the raw amino-acid sequence, 95 residues long: Nucleoid-associated protein MARTH_orf159 (95 aa).

Belongs to the YbaB/EbfC family. In terms of assembly, homodimer.

It localises to the cytoplasm. It is found in the nucleoid. Binds to DNA and alters its conformation. May be involved in regulation of gene expression, nucleoid organization and DNA protection. In Metamycoplasma arthritidis (strain 158L3-1) (Mycoplasma arthritidis), this protein is Nucleoid-associated protein MARTH_orf159.